Reading from the N-terminus, the 210-residue chain is Probable septum site-determining protein MinC (210 aa).

Belongs to the MinC family. Interacts with MinD and FtsZ.

Cell division inhibitor that blocks the formation of polar Z ring septums. Rapidly oscillates between the poles of the cell to destabilize FtsZ filaments that have formed before they mature into polar Z rings. Prevents FtsZ polymerization. The chain is Probable septum site-determining protein MinC from Clostridium novyi (strain NT).